Here is a 699-residue protein sequence, read N- to C-terminus: DnaJ homolog subfamily C member 14 (699 aa).

The tract at residues 1–230 is disordered; the sequence is MAQKHPGEGG…RHRLGRKRSQ (230 aa). The span at 75 to 84 shows a compositional bias: pro residues; it reads HGPPRGPGPP. The span at 86–102 shows a compositional bias: acidic residues; it reads AEEDPDQSEASSEESGV. Residues 117-133 are compositionally biased toward polar residues; it reads DGNSSFLSIPSTCNCQG. Over residues 163–176 the composition is skewed to acidic residues; sequence GEDEELEGEYDEEE. A compositionally biased stretch (basic and acidic residues) spans 203–218; sequence PAKEDTREGGRRDPRS. A compositionally biased stretch (basic residues) spans 219–228; that stretch reads PGRHRLGRKR. Transmembrane regions (helical) follow at residues 251–271, 301–321, and 327–347; these read AGFW…ETCG, GWAQ…AGLF, and LVGA…QLGW. Residues 444 to 508 form the J domain; the sequence is NPFHVLGVEA…ERRKEYEMKR (65 aa). The tract at residues 655–699 is disordered; sequence MSNGNFFAAPQPGPGATAASKPNSTVPKGEAKPKRRKKVRRPFQR. Positions 662–673 are enriched in low complexity; that stretch reads AAPQPGPGATAA. Residues 687 to 699 show a composition bias toward basic residues; it reads PKRRKKVRRPFQR.

As to quaternary structure, interacts with the FxxxFxxxF motif of DRD1 via its C-terminal domain. Interacts with pestivirus nonstructural protein NS2.

It localises to the endoplasmic reticulum membrane. Functionally, regulates the export of target proteins, such as DRD1, from the endoplasmic reticulum to the cell surface. Promotes cleavage of pestivirus polyprotein. In Bos taurus (Bovine), this protein is DnaJ homolog subfamily C member 14 (DNAJC14).